The following is a 257-amino-acid chain: MSRPLITRSPASPLNNQGIPTPAQLTKSNAPVHIDVGGHMYTSSLATLTKYPESRIGRLFDGTEPIVLDSLKQHYFIDRDGQMFRYILNFLRTSKLLIPDDFKDYTLLYEEAKYFQLQPMLLEMERWKQDRETSRFSRPCECLVVRVAPDLGERITLSGDKSLIEEVFPEIGDVMCNSVNAGWNHDSTHVIRFPLNGYCHLNSVQVLERLQQRGFEIVGSCGGGVDSSQFSEYVLRRELRRTPRVPSVIRIKQEPLD.

The tract at residues 1–25 (MSRPLITRSPASPLNNQGIPTPAQL) is disordered. 2 positions are modified to phosphoserine: Ser9 and Ser12. Polar residues predominate over residues 9–25 (SPASPLNNQGIPTPAQL). The BTB domain occupies 30 to 100 (APVHIDVGGH…LRTSKLLIPD (71 aa)).

Forms homopentamers. Interacts with KCTD15, probably forming heteropentamers depending on its abundance in a cell-type dependent manner. Interacts with TFAP2A, TFAP2B and TFAP2C via the BTB domain. In terms of processing, sumoylated.

It is found in the nucleus. May repress the transcriptional activity of AP-2 family members, including TFAP2A, TFAP2B and TFAP2C to various extent. This Rattus norvegicus (Rat) protein is BTB/POZ domain-containing protein KCTD1 (Kctd1).